Reading from the N-terminus, the 167-residue chain is Leptin (167 aa).

The N-terminal stretch at 1–21 is a signal peptide; it reads MHWGTLCGFLWLWPYLFYVQA. Cysteines 117 and 167 form a disulfide.

It belongs to the leptin family. In terms of assembly, interacts with SIGLEC6. In terms of tissue distribution, adipose tissue is the main source of leptin. It is also produced by other peripheral tissues such as the skeletal muscle. Expressed by intercalated and striated tracts of submandibular and parotid salivary gland intralobular ducts. Detected by fundic epithelium of the gastric mucosa. Secreted into blood and gastric juice.

The protein resides in the secreted. Functionally, key player in the regulation of energy balance and body weight control. Once released into the circulation, has central and peripheral effects by binding LEPR, found in many tissues, which results in the activation of several major signaling pathways. In the hypothalamus, acts as an appetite-regulating factor that induces a decrease in food intake and an increase in energy consumption by inducing anorexinogenic factors and suppressing orexigenic neuropeptides, also regulates bone mass and secretion of hypothalamo-pituitary-adrenal hormones. In the periphery, increases basal metabolism, influences reproductive function, regulates pancreatic beta-cell function and insulin secretion, is pro-angiogenic for endothelial cell and affects innate and adaptive immunity. In the arcuate nucleus of the hypothalamus, activates by depolarization POMC neurons inducing FOS and SOCS3 expression to release anorexigenic peptides and inhibits by hyperpolarization NPY neurons inducing SOCS3 with a consequent reduction on release of orexigenic peptides. In addition to its known satiety inducing effect, has a modulatory role in nutrient absorption. In the intestine, reduces glucose absorption by enterocytes by activating PKC and leading to a sequential activation of p38, PI3K and ERK signaling pathways which exerts an inhibitory effect on glucose absorption. Acts as a growth factor on certain tissues, through the activation of different signaling pathways increases expression of genes involved in cell cycle regulation such as CCND1, via JAK2-STAT3 pathway, or VEGFA, via MAPK1/3 and PI3K-AKT1 pathways. May also play an apoptotic role via JAK2-STAT3 pathway and up-regulation of BIRC5 expression. Pro-angiogenic, has mitogenic activity on vascular endothelial cells and plays a role in matrix remodeling by regulating the expression of matrix metalloproteinases (MMPs) and tissue inhibitors of metalloproteinases (TIMPs). In innate immunity, modulates the activity and function of neutrophils by increasing chemotaxis and the secretion of oxygen radicals. Increases phagocytosis by macrophages and enhances secretion of pro-inflammatory mediators. Increases cytotoxic ability of NK cells. Plays a pro-inflammatory role, in synergy with IL1B, by inducing NOS2 which promotes the production of IL6, IL8 and Prostaglandin E2, through a signaling pathway that involves JAK2, PI3K, MAP2K1/MEK1 and MAPK14/p38. In adaptive immunity, promotes the switch of memory T-cells towards T helper-1 cell immune responses. Increases CD4(+)CD25(-) T-cell proliferation and reduces autophagy during TCR (T-cell receptor) stimulation, through MTOR signaling pathway activation and BCL2 up-regulation. In Homo sapiens (Human), this protein is Leptin.